Reading from the N-terminus, the 393-residue chain is Flavohemoprotein (393 aa).

The Globin domain maps to 1–139 (MLSNAQRALI…LADLLIEAEE (139 aa)). H85 lines the heme b pocket. Catalysis depends on charge relay system residues Y95 and E138. The interval 150–393 (GGWRGVRRFR…FFGPAAALDA (244 aa)) is reductase. Residues 153–256 (RGVRRFRVAR…FPPAGDFVLR (104 aa)) enclose the FAD-binding FR-type domain. Residues Y191 and 205–208 (RNYS) contribute to the FAD site. 268–273 (GVGITP) provides a ligand contact to NADP(+). 384–387 (FFGP) lines the FAD pocket.

The protein belongs to the globin family. Two-domain flavohemoproteins subfamily. It in the C-terminal section; belongs to the flavoprotein pyridine nucleotide cytochrome reductase family. Heme b serves as cofactor. The cofactor is FAD.

It carries out the reaction 2 nitric oxide + NADPH + 2 O2 = 2 nitrate + NADP(+) + H(+). It catalyses the reaction 2 nitric oxide + NADH + 2 O2 = 2 nitrate + NAD(+) + H(+). Its function is as follows. Is involved in NO detoxification in an aerobic process, termed nitric oxide dioxygenase (NOD) reaction that utilizes O(2) and NAD(P)H to convert NO to nitrate, which protects the bacterium from various noxious nitrogen compounds. Therefore, plays a central role in the inducible response to nitrosative stress. This Pseudomonas aeruginosa (strain ATCC 15692 / DSM 22644 / CIP 104116 / JCM 14847 / LMG 12228 / 1C / PRS 101 / PAO1) protein is Flavohemoprotein.